Here is a 573-residue protein sequence, read N- to C-terminus: Heat shock protein 60A (573 aa).

The N-terminal 57 residues, 1–57 (MFRLPVSLARSSISRQLAMRGYAKDVRFGPEVRAMMLQGVDVLADAVAVTMGPKGRN), are a transit peptide targeting the mitochondrion.

It belongs to the chaperonin (HSP60) family.

It localises to the mitochondrion matrix. Prevents misfolding and promotes the refolding and proper assembly of unfolded polypeptides generated under stress conditions. The sequence is that of Heat shock protein 60A from Drosophila melanogaster (Fruit fly).